The primary structure comprises 377 residues: Pseudouridylate synthase RPUSD4, mitochondrial (377 aa).

A mitochondrion-targeting transit peptide spans methionine 1–leucine 46. Aspartate 153 is an active-site residue.

It belongs to the pseudouridine synthase RluA family. In terms of assembly, interacts with 16S mt-rRNA, mt-tRNA(Phe) and mt-tRNA(Met). Forms a regulatory protein-RNA complex, consisting of RCC1L, NGRN, RPUSD3, RPUSD4, TRUB2, FASTKD2 and 16S mt-rRNA.

It localises to the mitochondrion matrix. Its subcellular location is the nucleus. The protein localises to the cytoplasm. The catalysed reaction is uridine in 5S rRNA = pseudouridine in 5S rRNA. It carries out the reaction a uridine in tRNA = a pseudouridine in tRNA. It catalyses the reaction a uridine in mRNA = a pseudouridine in mRNA. In terms of biological role, catalyzes uridine to pseudouridine isomerization (pseudouridylation) of different mitochondrial RNA substrates. Acts on position 1397 in 16S mitochondrial ribosomal RNA (16S mt-rRNA). This modification is required for the assembly of 16S mt-rRNA into a functional mitochondrial ribosome. As a component of a functional protein-RNA module, consisting of RCC1L, NGRN, RPUSD3, RPUSD4, TRUB2, FASTKD2 and 16S mt-rRNA, controls 16S mt-rRNA abundance and is required for intra-mitochondrial translation. Acts on position 39 in mitochondrial tRNA(Phe). Also catalyzes pseudouridylation of mRNAs in nucleus: acts as a regulator of pre-mRNA splicing by mediating pseudouridylation of pre-mRNAs at locations associated with alternatively spliced regions. Pseudouridylation of pre-mRNAs near splice sites directly regulates mRNA splicing and mRNA 3'-end processing. The polypeptide is Pseudouridylate synthase RPUSD4, mitochondrial (Mus musculus (Mouse)).